Consider the following 532-residue polypeptide: Drimenyl diphosphate synthase (532 aa).

4 residues coordinate (2E,6E)-farnesyl diphosphate: R121, K122, Q152, and W154. Residue E158 coordinates Mg(2+). PFTB repeat units follow at residues 275–317 (PAAM…RVAG), 325–367 (IAAA…APNP), 428–469 (KRQA…SRDG), and 475–518 (LARA…CVLL). The Proton donor role is filled by D304. R502 serves as a coordination point for (2E,6E)-farnesyl diphosphate.

Belongs to the terpene cyclase/mutase family. Mg(2+) serves as cofactor. Ni(2+) is required as a cofactor. It depends on Co(2+) as a cofactor.

It carries out the reaction (2E,6E)-farnesyl diphosphate = (5S,9S,10S)-drim-7-en-11-yl diphosphate. In terms of biological role, catalyzes the cyclization of farnesyl diphosphate (FPP) to drimenyl diphosphate. This Streptantibioticus cattleyicolor (strain ATCC 35852 / DSM 46488 / JCM 4925 / NBRC 14057 / NRRL 8057) (Streptomyces cattleya) protein is Drimenyl diphosphate synthase.